The sequence spans 533 residues: (E)-beta-farnesene synthase (533 aa).

Mg(2+) contacts are provided by D286, D290, N430, S434, and E438. The short motif at 286–290 (DDMMD) is the DDXXD motif element.

It belongs to the terpene synthase family. Requires Mg(2+) as cofactor. It depends on Co(2+) as a cofactor. Mn(2+) serves as cofactor.

The protein localises to the cytoplasm. The enzyme catalyses (2E,6E)-farnesyl diphosphate = (E)-beta-farnesene + diphosphate. Its pathway is secondary metabolite biosynthesis; terpenoid biosynthesis. Functionally, sesquiterpene cyclase catalyzing the production of sixfold more beta-farnesene than alpha-bergamotene from farnesyl diphosphate. Involved in indirect defense by producing volatile signals attracting natural enemies of herbivores. In Zea diploperennis (Diploperennial teosinte), this protein is (E)-beta-farnesene synthase.